The following is a 473-amino-acid chain: Bifunctional protein HldE (473 aa).

Residues 1-318 (MKLSMPRFDQ…RAIQREEGSE (318 aa)) are ribokinase. 194–197 (NLSE) is an ATP binding site. The active site involves Asp263. Residues 343 to 473 (FTNGCFDILH…TAIVEKIRKH (131 aa)) are cytidylyltransferase.

The protein in the N-terminal section; belongs to the carbohydrate kinase PfkB family. It in the C-terminal section; belongs to the cytidylyltransferase family. Homodimer.

It carries out the reaction D-glycero-beta-D-manno-heptose 7-phosphate + ATP = D-glycero-beta-D-manno-heptose 1,7-bisphosphate + ADP + H(+). The enzyme catalyses D-glycero-beta-D-manno-heptose 1-phosphate + ATP + H(+) = ADP-D-glycero-beta-D-manno-heptose + diphosphate. It functions in the pathway nucleotide-sugar biosynthesis; ADP-L-glycero-beta-D-manno-heptose biosynthesis; ADP-L-glycero-beta-D-manno-heptose from D-glycero-beta-D-manno-heptose 7-phosphate: step 1/4. Its pathway is nucleotide-sugar biosynthesis; ADP-L-glycero-beta-D-manno-heptose biosynthesis; ADP-L-glycero-beta-D-manno-heptose from D-glycero-beta-D-manno-heptose 7-phosphate: step 3/4. Functionally, catalyzes the phosphorylation of D-glycero-D-manno-heptose 7-phosphate at the C-1 position to selectively form D-glycero-beta-D-manno-heptose-1,7-bisphosphate. In terms of biological role, catalyzes the ADP transfer from ATP to D-glycero-beta-D-manno-heptose 1-phosphate, yielding ADP-D-glycero-beta-D-manno-heptose. The protein is Bifunctional protein HldE of Pseudomonas entomophila (strain L48).